Here is a 688-residue protein sequence, read N- to C-terminus: Amino-acid acetyltransferase, mitochondrial (688 aa).

The N-terminal 45 residues, 1 to 45 (MSSRALTWPRTAKSSLLKQQTSSFVGQPKLGTPNCRSFSSTADRP), are a transit peptide targeting the mitochondrion. Disordered stretches follow at residues 1–59 (MSSR…SKSY) and 96–119 (LKAQHPPKAQTEPTTGHSKGTVTQ). 3 stretches are compositionally biased toward polar residues: residues 12–25 (AKSSLLKQQTSSFV), 34–57 (NCRSFSSTADRPINQSAEFSSSSK), and 106–119 (TEPTTGHSKGTVTQ). An N-acetyltransferase domain is found at 509 to 678 (NRPRLSLDDP…YEQVCRSIQP (170 aa)).

This sequence belongs to the acetyltransferase family.

It is found in the mitochondrion. It carries out the reaction L-glutamate + acetyl-CoA = N-acetyl-L-glutamate + CoA + H(+). The protein operates within amino-acid biosynthesis; L-arginine biosynthesis; N(2)-acetyl-L-ornithine from L-glutamate: step 1/4. Functionally, N-acetylglutamate synthase involved in arginine biosynthesis. This Aspergillus flavus (strain ATCC 200026 / FGSC A1120 / IAM 13836 / NRRL 3357 / JCM 12722 / SRRC 167) protein is Amino-acid acetyltransferase, mitochondrial (arg2).